We begin with the raw amino-acid sequence, 409 residues long: UDP-N-acetylglucosamine--N-acetylmuramyl-(pentapeptide) pyrophosphoryl-undecaprenol N-acetylglucosamine transferase (409 aa).

Residues 11–13 (TGG), Asn-125, Arg-169, Ser-199, and Gln-299 contribute to the UDP-N-acetyl-alpha-D-glucosamine site.

Belongs to the glycosyltransferase 28 family. MurG subfamily.

It is found in the cell membrane. It carries out the reaction di-trans,octa-cis-undecaprenyl diphospho-N-acetyl-alpha-D-muramoyl-L-alanyl-D-glutamyl-meso-2,6-diaminopimeloyl-D-alanyl-D-alanine + UDP-N-acetyl-alpha-D-glucosamine = di-trans,octa-cis-undecaprenyl diphospho-[N-acetyl-alpha-D-glucosaminyl-(1-&gt;4)]-N-acetyl-alpha-D-muramoyl-L-alanyl-D-glutamyl-meso-2,6-diaminopimeloyl-D-alanyl-D-alanine + UDP + H(+). The protein operates within cell wall biogenesis; peptidoglycan biosynthesis. Cell wall formation. Catalyzes the transfer of a GlcNAc subunit on undecaprenyl-pyrophosphoryl-MurNAc-pentapeptide (lipid intermediate I) to form undecaprenyl-pyrophosphoryl-MurNAc-(pentapeptide)GlcNAc (lipid intermediate II). In Clostridioides difficile (strain 630) (Peptoclostridium difficile), this protein is UDP-N-acetylglucosamine--N-acetylmuramyl-(pentapeptide) pyrophosphoryl-undecaprenol N-acetylglucosamine transferase.